The primary structure comprises 709 residues: Fatty acid oxidation complex subunit alpha (709 aa).

Residues 1-188 (MEKTFNLTRR…KMGLVNDVVP (188 aa)) form an enoyl-CoA hydratase region. A 3-hydroxyacyl-CoA dehydrogenase region spans residues 308–709 (RKVKKAVILG…EMAAEKTRFF (402 aa)).

The protein in the N-terminal section; belongs to the enoyl-CoA hydratase/isomerase family. In the central section; belongs to the 3-hydroxyacyl-CoA dehydrogenase family. Heterotetramer of two alpha chains (FadJ) and two beta chains (FadI).

The protein localises to the cytoplasm. It carries out the reaction a (3S)-3-hydroxyacyl-CoA = a (2E)-enoyl-CoA + H2O. The enzyme catalyses a 4-saturated-(3S)-3-hydroxyacyl-CoA = a (3E)-enoyl-CoA + H2O. It catalyses the reaction a (3S)-3-hydroxyacyl-CoA + NAD(+) = a 3-oxoacyl-CoA + NADH + H(+). The catalysed reaction is (3S)-3-hydroxybutanoyl-CoA = (3R)-3-hydroxybutanoyl-CoA. Its pathway is lipid metabolism; fatty acid beta-oxidation. In terms of biological role, catalyzes the formation of a hydroxyacyl-CoA by addition of water on enoyl-CoA. Also exhibits 3-hydroxyacyl-CoA epimerase and 3-hydroxyacyl-CoA dehydrogenase activities. This chain is Fatty acid oxidation complex subunit alpha, found in Shewanella sp. (strain MR-4).